The sequence spans 570 residues: 2-isopropylmalate synthase (570 aa).

The 275-residue stretch at proline 31–asparagine 305 folds into the Pyruvate carboxyltransferase domain. 4 residues coordinate Mg(2+): aspartate 40, histidine 244, histidine 246, and asparagine 280. The segment at serine 437–alanine 570 is regulatory domain.

The protein belongs to the alpha-IPM synthase/homocitrate synthase family. LeuA type 2 subfamily. Homodimer. Mg(2+) serves as cofactor.

Its subcellular location is the cytoplasm. The catalysed reaction is 3-methyl-2-oxobutanoate + acetyl-CoA + H2O = (2S)-2-isopropylmalate + CoA + H(+). It functions in the pathway amino-acid biosynthesis; L-leucine biosynthesis; L-leucine from 3-methyl-2-oxobutanoate: step 1/4. Functionally, catalyzes the condensation of the acetyl group of acetyl-CoA with 3-methyl-2-oxobutanoate (2-ketoisovalerate) to form 3-carboxy-3-hydroxy-4-methylpentanoate (2-isopropylmalate). The protein is 2-isopropylmalate synthase of Ralstonia pickettii (strain 12J).